A 281-amino-acid chain; its full sequence is Diaminopimelate epimerase (281 aa).

2 residues coordinate substrate: N14 and N65. C74 functions as the Proton donor in the catalytic mechanism. Substrate contacts are provided by residues 75–76 (GN), N165, N198, and 216–217 (ER). The active-site Proton acceptor is the C225. 226 to 227 (GT) is a substrate binding site.

The protein belongs to the diaminopimelate epimerase family. As to quaternary structure, homodimer.

It is found in the cytoplasm. It carries out the reaction (2S,6S)-2,6-diaminopimelate = meso-2,6-diaminopimelate. Its pathway is amino-acid biosynthesis; L-lysine biosynthesis via DAP pathway; DL-2,6-diaminopimelate from LL-2,6-diaminopimelate: step 1/1. Functionally, catalyzes the stereoinversion of LL-2,6-diaminopimelate (L,L-DAP) to meso-diaminopimelate (meso-DAP), a precursor of L-lysine and an essential component of the bacterial peptidoglycan. This Leptospira interrogans serogroup Icterohaemorrhagiae serovar copenhageni (strain Fiocruz L1-130) protein is Diaminopimelate epimerase.